The following is a 118-amino-acid chain: Large ribosomal subunit protein uL18 (118 aa).

The protein belongs to the universal ribosomal protein uL18 family. Part of the 50S ribosomal subunit; part of the 5S rRNA/L5/L18/L25 subcomplex. Contacts the 5S and 23S rRNAs.

Functionally, this is one of the proteins that bind and probably mediate the attachment of the 5S RNA into the large ribosomal subunit, where it forms part of the central protuberance. The polypeptide is Large ribosomal subunit protein uL18 (Rickettsia canadensis (strain McKiel)).